Reading from the N-terminus, the 685-residue chain is ATP-dependent zinc metalloprotease FTSH 8, chloroplastic (685 aa).

A chloroplast-targeting transit peptide spans 1-37 (MAASSACLLGNGLSVYTTKQRFQKLGLDRTSKVTVVK). The transit peptide at 38–73 (ASLDEKKHEGRRGFFKLLLGNAAAGVGLLASGNANA) directs the protein to the thylakoid. Residues 38–161 (ASLDEKKHEG…HNAQEDQGSP (124 aa)) lie on the Lumenal, thylakoid side of the membrane. Residues 162-182 (ILNLIGNLAFPVILIGGLFLL) traverse the membrane as a helical segment. Residues 183–685 (SRRSSGGMGG…STSTPTPASV (503 aa)) are Stromal-facing. 260 to 267 (GPPGTGKT) lines the ATP pocket. Zn(2+) is bound at residue H481. Residue E482 is part of the active site. Positions 485 and 559 each coordinate Zn(2+).

This sequence in the N-terminal section; belongs to the AAA ATPase family. In the C-terminal section; belongs to the peptidase M41 family. In terms of assembly, heterohexamers with FTSH1, FTSH2 and FTSH5. May also form homooligomers. The cofactor is Zn(2+). Expressed in cotyledons, cauline and rosette leaves, stems, sepals, flovers and siliques. Very low in roots.

The protein resides in the plastid. The protein localises to the chloroplast thylakoid membrane. Its function is as follows. Part of a complex that function as an ATP-dependent zinc metallopeptidase. Involved in the thylakoid formation and in the removal of damaged D1 in the photosystem II, preventing cell death under high-intensity light conditions. In Arabidopsis thaliana (Mouse-ear cress), this protein is ATP-dependent zinc metalloprotease FTSH 8, chloroplastic (FTSH8).